A 145-amino-acid polypeptide reads, in one-letter code: Large ribosomal subunit protein bL17 (145 aa).

The interval 123-145 is disordered; it reads KRVDRKKKDPAKDKTEEKKLATA.

This sequence belongs to the bacterial ribosomal protein bL17 family. Part of the 50S ribosomal subunit. Contacts protein L32.

In Pelagibacter ubique (strain HTCC1062), this protein is Large ribosomal subunit protein bL17.